The chain runs to 502 residues: MAAPCEGQAFAVGVEKNWGAVVRSPEGTPQKIRQLIDEGIAPEEGGVDAQDTSATSQSVNGSPQAEQPSLESTSKEAFFSRVETFSSLKWAGKPPELSPLVCAKYGWVTVECDMLKCSSCQAFLCASLQPAFDFDRYKQRCAELKKALCTAHEKFCFWPDSPSPDRFGMLPLEEPAILVSEFLDRFQSLCHLDLQLPSLRPEDLKTMCLTEDKISLLLHLLEDELDHRTDERKTTTKLGSDIQVHVTACILSVCGWACSSSLEPMQLSLITCSQCMRKVGLWGFQQIESSMTDLDASFGLTSSPIPGLEGRPERLPLVPESPRRMMTRSQDATFFPGSEQAEKSPGPIVSRTRSWDSSSPVDRPEPEAASPTTRTRPVTRSMGTGDPSGLEVPSSPLRKAKRARLCSSSSSDTSSRSFFDPTSQHRDWCPWVNVTLGKESRENGGTEPDASAPAEPGWKAVLTILLAHKQSSQPAETDSMSLSEKSRKVFRIFRQWESLCSC.

Residue alanine 2 is modified to N-acetylalanine. Residue serine 24 is modified to Phosphoserine. Position 28 is a phosphothreonine (threonine 28). Residues 35–74 (LIDEGIAPEEGGVDAQDTSATSQSVNGSPQAEQPSLESTS) form a disordered region. Over residues 50-72 (QDTSATSQSVNGSPQAEQPSLES) the composition is skewed to polar residues. Phosphoserine is present on residues serine 58 and serine 62. Threonine 84 carries the phosphothreonine modification. The segment at 102-156 (CAKYGWVTVECDMLKCSSCQAFLCASLQPAFDFDRYKQRCAELKKALCTAHEKFC) adopts a C3HC-type zinc-finger fold. The segment at 302–423 (SSPIPGLEGR…SSRSFFDPTS (122 aa)) is disordered. 2 positions are modified to phosphoserine: serine 321 and serine 329. A Phosphothreonine modification is found at threonine 333. A phosphoserine mark is found at serine 338, serine 344, serine 354, serine 359, and serine 370. Over residues 351-360 (RTRSWDSSSP) the composition is skewed to polar residues. The span at 371–380 (PTTRTRPVTR) shows a compositional bias: low complexity. Serine 381 is subject to Phosphoserine. Threonine 384 bears the Phosphothreonine mark. Serine 395 carries the post-translational modification Phosphoserine. The Nuclear localization signal signature appears at 396 to 402 (PLRKAKR). Serine 407 and serine 483 each carry phosphoserine. Residues 407-422 (SSSSSDTSSRSFFDPT) show a composition bias toward low complexity.

Interacts with TPR; this interaction mediates ZC3HC1 nuclear envelopes (NE)-association but also required for proper positioning of a substantial amount of TPR at the nuclear basket (NB). Phosphorylated. May also be weakly phosphorylated on Tyr residues.

Its subcellular location is the nucleus. It localises to the nucleus envelope. Required for proper positioning of a substantial amount of TPR at the nuclear basket (NB) through interaction with TPR. The sequence is that of Zinc finger C3HC-type protein 1 (ZC3HC1) from Pongo abelii (Sumatran orangutan).